The chain runs to 118 residues: D-dopachrome decarboxylase-B (118 aa).

An N-acetylproline modification is found at Pro2.

It belongs to the MIF family. In terms of assembly, homotrimer.

It localises to the cytoplasm. It catalyses the reaction D-dopachrome + H(+) = 5,6-dihydroxyindole + CO2. Its function is as follows. Tautomerization of D-dopachrome with decarboxylation to give 5,6-dihydroxyindole (DHI). In Xenopus laevis (African clawed frog), this protein is D-dopachrome decarboxylase-B (ddt-b).